The sequence spans 304 residues: UDP-3-O-acyl-N-acetylglucosamine deacetylase (304 aa).

Residues histidine 78, histidine 237, and aspartate 241 each contribute to the Zn(2+) site. Catalysis depends on histidine 264, which acts as the Proton donor.

It belongs to the LpxC family. The cofactor is Zn(2+).

The catalysed reaction is a UDP-3-O-[(3R)-3-hydroxyacyl]-N-acetyl-alpha-D-glucosamine + H2O = a UDP-3-O-[(3R)-3-hydroxyacyl]-alpha-D-glucosamine + acetate. The protein operates within glycolipid biosynthesis; lipid IV(A) biosynthesis; lipid IV(A) from (3R)-3-hydroxytetradecanoyl-[acyl-carrier-protein] and UDP-N-acetyl-alpha-D-glucosamine: step 2/6. In terms of biological role, catalyzes the hydrolysis of UDP-3-O-myristoyl-N-acetylglucosamine to form UDP-3-O-myristoylglucosamine and acetate, the committed step in lipid A biosynthesis. This is UDP-3-O-acyl-N-acetylglucosamine deacetylase from Legionella pneumophila (strain Paris).